The chain runs to 278 residues: Dermonecrotic toxin LspiSicTox-betaIE2iii (278 aa).

Residue His-5 is part of the active site. Residues Glu-25 and Asp-27 each coordinate Mg(2+). His-41 serves as the catalytic Nucleophile. 2 cysteine pairs are disulfide-bonded: Cys-45/Cys-51 and Cys-47/Cys-190. Asp-85 is a binding site for Mg(2+).

Belongs to the arthropod phospholipase D family. Class II subfamily. Requires Mg(2+) as cofactor. As to expression, expressed by the venom gland.

The protein localises to the secreted. It catalyses the reaction an N-(acyl)-sphingosylphosphocholine = an N-(acyl)-sphingosyl-1,3-cyclic phosphate + choline. The enzyme catalyses an N-(acyl)-sphingosylphosphoethanolamine = an N-(acyl)-sphingosyl-1,3-cyclic phosphate + ethanolamine. It carries out the reaction a 1-acyl-sn-glycero-3-phosphocholine = a 1-acyl-sn-glycero-2,3-cyclic phosphate + choline. The catalysed reaction is a 1-acyl-sn-glycero-3-phosphoethanolamine = a 1-acyl-sn-glycero-2,3-cyclic phosphate + ethanolamine. Functionally, dermonecrotic toxins cleave the phosphodiester linkage between the phosphate and headgroup of certain phospholipids (sphingolipid and lysolipid substrates), forming an alcohol (often choline) and a cyclic phosphate. This toxin acts on sphingomyelin (SM). It may also act on ceramide phosphoethanolamine (CPE), lysophosphatidylcholine (LPC) and lysophosphatidylethanolamine (LPE), but not on lysophosphatidylserine (LPS), and lysophosphatidylglycerol (LPG). It acts by transphosphatidylation, releasing exclusively cyclic phosphate products as second products. Induces dermonecrosis, hemolysis, increased vascular permeability, edema, inflammatory response, and platelet aggregation. The polypeptide is Dermonecrotic toxin LspiSicTox-betaIE2iii (Loxosceles spinulosa (Recluse spider)).